A 131-amino-acid polypeptide reads, in one-letter code: Fumarate reductase subunit C (131 aa).

Transmembrane regions (helical) follow at residues 30 to 50 (EGTAVPAVWFSIELIFGLFAL), 63 to 83 (FLQNPVIVIINLITLAAALLH), and 109 to 129 (IIKSLWAVTVVATIVILFVAL).

The protein belongs to the FrdC family. As to quaternary structure, part of an enzyme complex containing four subunits: a flavoprotein (FrdA), an iron-sulfur protein (FrdB), and two hydrophobic anchor proteins (FrdC and FrdD).

The protein resides in the cell inner membrane. Its function is as follows. Two distinct, membrane-bound, FAD-containing enzymes are responsible for the catalysis of fumarate and succinate interconversion; fumarate reductase is used in anaerobic growth, and succinate dehydrogenase is used in aerobic growth. Anchors the catalytic components of the fumarate reductase complex to the cell inner membrane, binds quinones. In Shigella boydii serotype 4 (strain Sb227), this protein is Fumarate reductase subunit C.